We begin with the raw amino-acid sequence, 329 residues long: Malate dehydrogenase (329 aa).

12 to 18 (GAAGQIG) is an NAD(+) binding site. Residues Arg95 and Arg101 each coordinate substrate. Residues Asn108, Gln115, and 132-134 (VGN) contribute to the NAD(+) site. Substrate contacts are provided by Asn134 and Arg165. His190 serves as the catalytic Proton acceptor.

The protein belongs to the LDH/MDH superfamily. MDH type 2 family.

The enzyme catalyses (S)-malate + NAD(+) = oxaloacetate + NADH + H(+). Its function is as follows. Catalyzes the reversible oxidation of malate to oxaloacetate. The chain is Malate dehydrogenase from Ralstonia nicotianae (strain ATCC BAA-1114 / GMI1000) (Ralstonia solanacearum).